Reading from the N-terminus, the 780-residue chain is Cullin-1 (780 aa).

Positions 710 to 771 (DRKSVISACI…EKEYMLRTEG (62 aa)) constitute a Cullin neddylation domain. Lys724 is covalently cross-linked (Glycyl lysine isopeptide (Lys-Gly) (interchain with G-Cter in NEDD8)).

Belongs to the cullin family. As to quaternary structure, component of an SCF (SKP1-CUL1-F-box protein) E3 ubiquitin ligase complex composed of cul-1, fsn-1, rpm-1 and skr-1. Interacts with Skp1-related proteins skr-1, skr-2, skr-3, skr-4, skr-7, skr-8, skr-9 and skr-10. In terms of processing, neddylated; which enhances the ubiquitination activity of SCF. As to expression, ubiquitous.

The protein resides in the cytoplasm. It participates in protein modification; protein ubiquitination. In terms of biological role, probable core component of multiple cullin-RING-based SCF (SKP1-CUL1-F-box) E3 ubiquitin-protein ligase complexes which mediate the ubiquitination and subsequent proteasomal degradation of target proteins. As a scaffold protein may contribute to catalysis through positioning of the substrate and the ubiquitin-conjugating enzyme. Required for developmentally programmed transitions from the G1 phase of the cell cycle to the G0 phase or the apoptotic pathway. The protein is Cullin-1 (cul-1) of Caenorhabditis elegans.